Here is a 454-residue protein sequence, read N- to C-terminus: Chromosomal replication initiator protein DnaA (454 aa).

The interval 1–74 is domain I, interacts with DnaA modulators; it reads MFDLDKFWQF…IQEAYAYADM (74 aa). Residues 74 to 116 form a domain II region; the sequence is MEIQPKFEVAGKEGPERLVTPQPRIKTNQEILENRRDEFAQDL. The domain III, AAA+ region stretch occupies residues 117–333; the sequence is QLNSKYTFDT…GALVKVQAHA (217 aa). ATP is bound by residues glycine 161, glycine 163, lysine 164, and threonine 165. The domain IV, binds dsDNA stretch occupies residues 334 to 454; the sequence is TIEREDINVD…VYDLKAMLEH (121 aa).

It belongs to the DnaA family. Oligomerizes as a right-handed, spiral filament on DNA at oriC.

The protein resides in the cytoplasm. In terms of biological role, plays an essential role in the initiation and regulation of chromosomal replication. ATP-DnaA binds to the origin of replication (oriC) to initiate formation of the DNA replication initiation complex once per cell cycle. Binds the DnaA box (a 9 base pair repeat at the origin) and separates the double-stranded (ds)DNA. Forms a right-handed helical filament on oriC DNA; dsDNA binds to the exterior of the filament while single-stranded (ss)DNA is stabiized in the filament's interior. The ATP-DnaA-oriC complex binds and stabilizes one strand of the AT-rich DNA unwinding element (DUE), permitting loading of DNA polymerase. After initiation quickly degrades to an ADP-DnaA complex that is not apt for DNA replication. Binds acidic phospholipids. This chain is Chromosomal replication initiator protein DnaA, found in Lactobacillus johnsonii (strain CNCM I-12250 / La1 / NCC 533).